The primary structure comprises 847 residues: Receptor-like protein 12 (847 aa).

The first 27 residues, 1–27 (MMIRSHRHWVFSSRIIIFLSLLVHSLA), serve as a signal peptide directing secretion. At 28–798 (SSSPHFCRDD…LSEAEENMFN (771 aa)) the chain is on the extracellular side. 4 N-linked (GlcNAc...) asparagine glycosylation sites follow: Asn-52, Asn-66, Asn-103, and Asn-132. 25 LRR repeats span residues 109 to 133 (LQYLRHLDLTNCNLYGEIPSSLGNL), 135 to 157 (HLTLVNLYFNKFVGEIPASIGNL), 158 to 181 (NQLRHLILANNVLTGEIPSSLGNL), 183 to 205 (RLVNLELFSNRLVGKIPDSIGDL), 206 to 229 (KQLRNLSLASNNLIGEIPSSLGNL), 231 to 253 (NLVHLVLTHNQLVGEVPASIGNL), 254 to 277 (IELRVMSFENNSLSGNIPISFANL), 279 to 301 (KLSIFVLSSNNFTSTFPFDMSIF), 302 to 325 (HNLEYFDVSYNSFSGPFPKSLLLI), 326 to 350 (PSLESIYLQENQFTGPIEFANTSSS), 351 to 374 (TKLQDLILGRNRLHGPIPESISRL), 375 to 398 (LNLEELDISHNNFTGAIPPTISKL), 400 to 422 (NLLHLDLSKNNLEGEVPACLWRL), 424 to 442 (TMVLSHNSFSSFENTSQEE), 443 to 466 (ALIEELDLNSNSFQGPIPYMICKL), 467 to 491 (SSLGFLDLSNNLFSGSIPSCIRNFS), 492 to 514 (GSIKELNLGDNNFSGTLPDIFSK), 516 to 539 (TELVSLDVSHNQLEGKFPKSLINC), 541 to 562 (ALELVNVESNKIKDIFPSWLES), 563 to 587 (LPSLHVLNLRSNKFYGPLYHRHASI), 589 to 613 (FQSLRIIDISHNNFSGTLPPYYFSN), 657 to 681 (RRDFRAIDFSGNKINGNIPESLGYL), 682 to 704 (KELRVLNLSGNAFTSVIPRFLAN), 705 to 729 (LTKLETLDISRNKLSGQIPQDLAAL), and 731 to 754 (FLSYMNFSHNLLQGPVPRGTQFQR). Residue Asn-180 is glycosylated (N-linked (GlcNAc...) asparagine). 2 N-linked (GlcNAc...) asparagine glycosylation sites follow: Asn-210 and Asn-228. Residues Asn-263, Asn-276, and Asn-289 are each glycosylated (N-linked (GlcNAc...) asparagine). N-linked (GlcNAc...) asparagine glycosylation occurs at Asn-346. Asn-386 carries N-linked (GlcNAc...) asparagine glycosylation. Asn-437 is a glycosylation site (N-linked (GlcNAc...) asparagine). N-linked (GlcNAc...) asparagine glycans are attached at residues Asn-489 and Asn-503. A glycan (N-linked (GlcNAc...) asparagine) is linked at Asn-601. 2 N-linked (GlcNAc...) asparagine glycosylation sites follow: Asn-688 and Asn-704. A glycan (N-linked (GlcNAc...) asparagine) is linked at Asn-736. Residues 799–819 (WVAAAIAYGPGVLCGLVIGHF) traverse the membrane as a helical segment. The Cytoplasmic segment spans residues 820 to 847 (YTSHNHEWFTEKFGRKQHKALTSVKCSL).

It belongs to the RLP family.

It is found in the cell membrane. Its function is as follows. Involved in the perception of CLV3 and CLV3-like peptides, that act as extracellular signals regulating meristems maintenance. In Arabidopsis thaliana (Mouse-ear cress), this protein is Receptor-like protein 12.